Here is a 273-residue protein sequence, read N- to C-terminus: 4-hydroxy-tetrahydrodipicolinate reductase (273 aa).

Residue 12-17 (GAAGRM) participates in NAD(+) binding. Arginine 39 contributes to the NADP(+) binding site. NAD(+) contacts are provided by residues 102–104 (GTT) and 126–129 (AANF). Catalysis depends on histidine 159, which acts as the Proton donor/acceptor. Histidine 160 contacts (S)-2,3,4,5-tetrahydrodipicolinate. Lysine 163 (proton donor) is an active-site residue. 169-170 (GT) provides a ligand contact to (S)-2,3,4,5-tetrahydrodipicolinate.

It belongs to the DapB family. As to quaternary structure, homotetramer.

The protein resides in the cytoplasm. It carries out the reaction (S)-2,3,4,5-tetrahydrodipicolinate + NAD(+) + H2O = (2S,4S)-4-hydroxy-2,3,4,5-tetrahydrodipicolinate + NADH + H(+). It catalyses the reaction (S)-2,3,4,5-tetrahydrodipicolinate + NADP(+) + H2O = (2S,4S)-4-hydroxy-2,3,4,5-tetrahydrodipicolinate + NADPH + H(+). The protein operates within amino-acid biosynthesis; L-lysine biosynthesis via DAP pathway; (S)-tetrahydrodipicolinate from L-aspartate: step 4/4. In terms of biological role, catalyzes the conversion of 4-hydroxy-tetrahydrodipicolinate (HTPA) to tetrahydrodipicolinate. This is 4-hydroxy-tetrahydrodipicolinate reductase from Erwinia tasmaniensis (strain DSM 17950 / CFBP 7177 / CIP 109463 / NCPPB 4357 / Et1/99).